Reading from the N-terminus, the 539-residue chain is Phosphoenolpyruvate carboxykinase (ATP) (539 aa).

Substrate is bound by residues R64, Y206, and K212. Residues K212, H231, and 247 to 255 (GLSGTGKTT) contribute to the ATP site. K212 and H231 together coordinate Mn(2+). D268 lines the Mn(2+) pocket. Residues E296, R332, 448–449 (RI), and T454 each bind ATP. A substrate-binding site is contributed by R332.

It belongs to the phosphoenolpyruvate carboxykinase (ATP) family. As to quaternary structure, monomer. Mn(2+) is required as a cofactor.

It is found in the cytoplasm. The catalysed reaction is oxaloacetate + ATP = phosphoenolpyruvate + ADP + CO2. It participates in carbohydrate biosynthesis; gluconeogenesis. Functionally, involved in the gluconeogenesis. Catalyzes the conversion of oxaloacetate (OAA) to phosphoenolpyruvate (PEP) through direct phosphoryl transfer between the nucleoside triphosphate and OAA. This chain is Phosphoenolpyruvate carboxykinase (ATP), found in Salmonella agona (strain SL483).